Here is a 471-residue protein sequence, read N- to C-terminus: Glutamate--tRNA ligase (471 aa).

Residues 9–19 (PSPTGYLHVGG) carry the 'HIGH' region motif. Residues cysteine 98, cysteine 100, cysteine 125, and histidine 127 each coordinate Zn(2+). A 'KMSKS' region motif is present at residues 237–241 (KLSKR). Lysine 240 is a binding site for ATP.

This sequence belongs to the class-I aminoacyl-tRNA synthetase family. Glutamate--tRNA ligase type 1 subfamily. As to quaternary structure, monomer. Zn(2+) is required as a cofactor.

It localises to the cytoplasm. It catalyses the reaction tRNA(Glu) + L-glutamate + ATP = L-glutamyl-tRNA(Glu) + AMP + diphosphate. Functionally, catalyzes the attachment of glutamate to tRNA(Glu) in a two-step reaction: glutamate is first activated by ATP to form Glu-AMP and then transferred to the acceptor end of tRNA(Glu). This chain is Glutamate--tRNA ligase, found in Citrobacter koseri (strain ATCC BAA-895 / CDC 4225-83 / SGSC4696).